The chain runs to 97 residues: YcgL domain-containing protein PputGB1_4120 (97 aa).

In terms of domain architecture, YcgL spans 3–87; that stretch reads RICSIYKSPR…AEDEYIEHLP (85 aa).

This is YcgL domain-containing protein PputGB1_4120 from Pseudomonas putida (strain GB-1).